A 500-amino-acid chain; its full sequence is Ribose import ATP-binding protein RbsA (500 aa).

ABC transporter domains lie at 3–239 and 246–493; these read IEMK…VGRE and DRTP…TGGV. 35–42 is an ATP binding site; the sequence is GENGAGKS.

It belongs to the ABC transporter superfamily. Ribose importer (TC 3.A.1.2.1) family. The complex is composed of an ATP-binding protein (RbsA), two transmembrane proteins (RbsC) and a solute-binding protein (RbsB).

The protein localises to the cell membrane. The enzyme catalyses D-ribose(out) + ATP + H2O = D-ribose(in) + ADP + phosphate + H(+). Part of the ABC transporter complex RbsABC involved in ribose import. Responsible for energy coupling to the transport system. The sequence is that of Ribose import ATP-binding protein RbsA from Lacticaseibacillus paracasei (strain ATCC 334 / BCRC 17002 / CCUG 31169 / CIP 107868 / KCTC 3260 / NRRL B-441) (Lactobacillus paracasei).